The sequence spans 131 residues: Profilin-A (131 aa).

This sequence belongs to the profilin family. Occurs in many kinds of cells as a complex with monomeric actin in a 1:1 ratio.

The protein resides in the cytoplasm. The protein localises to the cytoskeleton. Binds to actin and affects the structure of the cytoskeleton. At high concentrations, profilin prevents the polymerization of actin, whereas it enhances it at low concentrations. By binding to PIP2, it inhibits the formation of IP3 and DG. May serve as a modulator in pollen germination and pollen tube growth. The protein is Profilin-A of Oryza sativa subsp. japonica (Rice).